The sequence spans 558 residues: MNNNIINLIAAIVLSLSIIFGWQYFVIKPEQKKQQQRMAIYKSENLKKQKALAEHTSNITVQEAGQVQRIKIESESLTGSIALKGLRFDDLILKKYKQDLSQNSPAVRLFSPANTENAYFAEIGLVSNLSSVKLPNSNTVWNSDSEVLSPEKPVNLFWVNEDGIKFLVTITVDKNYLFTIEQTIINNSDKELPVQAYGLINRKYIAVEKAVNILHQGPIGCIDENLKEYSYDDIKDQKSAKFALSKVDWIGIADKYWLSSLIPDKSSSYSANFNYALKQGAERYQVDFISPVQVIKPGKNLSIKSRIFAGAKKVDLLDEYEKSYDIKLFDRAIDFGWFYIITKPVFYAMNFFYGYVGNFGVSILIVTVIIKLLMFTLANKSYRSMKKMKNLQPEIDRIKNLYNNDKARLNQEIMALYKKSKVNPVAGCLPILVQIPVFFSIYKVLYVTIEMRHAPFYGWIKDLSSPDPTTIFNLFGLLPFAPPSFLMIGAWPILMAITMFLHQKMSPELADPIQAQVMKFMPLIFLFMFSSFPVGLLIYWSWNNILSIIQQYYINKFN.

Helical transmembrane passes span 5 to 25 (IINL…WQYF), 332 to 352 (AIDF…MNFF), 355 to 375 (YVGN…LLMF), 429 to 449 (LPIL…YVTI), 474 to 494 (LFGL…WPIL), and 520 to 540 (FMPL…LIYW).

The protein belongs to the OXA1/ALB3/YidC family. Type 1 subfamily. As to quaternary structure, interacts with the Sec translocase complex via SecD. Specifically interacts with transmembrane segments of nascent integral membrane proteins during membrane integration.

It localises to the cell inner membrane. Required for the insertion and/or proper folding and/or complex formation of integral membrane proteins into the membrane. Involved in integration of membrane proteins that insert both dependently and independently of the Sec translocase complex, as well as at least some lipoproteins. Aids folding of multispanning membrane proteins. The polypeptide is Membrane protein insertase YidC (Rickettsia typhi (strain ATCC VR-144 / Wilmington)).